Here is a 353-residue protein sequence, read N- to C-terminus: Photosystem II D2 protein (353 aa).

Residue Thr-2 is modified to N-acetylthreonine. Position 2 is a phosphothreonine (Thr-2). A helical membrane pass occupies residues 41–61 (CAYFAVGGWFTGTTFVTSWYT). His-118 lines the chlorophyll a pocket. Residues 125-141 (GFMLRQFELARSVQLRP) form a helical membrane-spanning segment. Gln-130 and Asn-143 together coordinate pheophytin a. The chain crosses the membrane as a helical span at residues 153 to 166 (VFVSVFLIYPLGQS). A chlorophyll a-binding site is contributed by His-198. Residues 208–228 (AALLCAIHGATVENTLFEDGD) traverse the membrane as a helical segment. Positions 215 and 262 each coordinate a plastoquinone. A Fe cation-binding site is contributed by His-215. A Fe cation-binding site is contributed by His-269. A helical transmembrane segment spans residues 279–295 (GLWMSALGVVGLALNLR).

It belongs to the reaction center PufL/M/PsbA/D family. As to quaternary structure, PSII is composed of 1 copy each of membrane proteins PsbA, PsbB, PsbC, PsbD, PsbE, PsbF, PsbH, PsbI, PsbJ, PsbK, PsbL, PsbM, PsbT, PsbX, PsbY, PsbZ, Psb30/Ycf12, at least 3 peripheral proteins of the oxygen-evolving complex and a large number of cofactors. It forms dimeric complexes. The D1/D2 heterodimer binds P680, chlorophylls that are the primary electron donor of PSII, and subsequent electron acceptors. It shares a non-heme iron and each subunit binds pheophytin, quinone, additional chlorophylls, carotenoids and lipids. There is also a Cl(-1) ion associated with D1 and D2, which is required for oxygen evolution. The PSII complex binds additional chlorophylls, carotenoids and specific lipids. is required as a cofactor.

Its subcellular location is the plastid. The protein resides in the chloroplast thylakoid membrane. It carries out the reaction 2 a plastoquinone + 4 hnu + 2 H2O = 2 a plastoquinol + O2. Functionally, photosystem II (PSII) is a light-driven water:plastoquinone oxidoreductase that uses light energy to abstract electrons from H(2)O, generating O(2) and a proton gradient subsequently used for ATP formation. It consists of a core antenna complex that captures photons, and an electron transfer chain that converts photonic excitation into a charge separation. The D1/D2 (PsbA/PsbD) reaction center heterodimer binds P680, the primary electron donor of PSII as well as several subsequent electron acceptors. D2 is needed for assembly of a stable PSII complex. This is Photosystem II D2 protein from Nicotiana tabacum (Common tobacco).